The primary structure comprises 471 residues: Type 2 glycosyltransferase (471 aa).

The chain crosses the membrane as a helical span at residues 4-24 (ILGWFWAFVSAFVLRYLRTIV). 3 N-linked (GlcNAc...) asparagine glycosylation sites follow: Asn29, Asn88, and Asn222. A run of 3 helical transmembrane segments spans residues 305-325 (CLQT…FYSL), 339-359 (MAFT…KLWG), and 368-388 (VIYI…KFWG). An N-linked (GlcNAc...) asparagine glycan is attached at Asn458.

It belongs to the GT2 glycosyltransferase family.

The protein localises to the cell membrane. Its function is as follows. Glycosyltransferase involved in the maintenance of the outermost surface of the fungal cell wall. Likely functions in the synthesis of a currently unknown, potentially minor but widespread, extracellular or outer cell wall polysaccharide which plays a key role in facilitating many interactions between plants and fungi by enabling hyphal growth on solid matrices. The sequence is that of Type 2 glycosyltransferase from Zymoseptoria tritici (strain CBS 115943 / IPO323) (Speckled leaf blotch fungus).